Reading from the N-terminus, the 447-residue chain is SPARC-related modular calcium-binding protein 2 (447 aa).

The N-terminal stretch at 1 to 21 is a signal peptide; that stretch reads MLPPQLCWLPLLAALLPPVPA. One can recognise a Kazal-like domain in the interval 34 to 86; it reads QDKDRDCSLDCPSSPQKPLCASDGRTFLSRCEFQRAKCKDPQLEIAHRGNCKD. Intrachain disulfides connect cysteine 40–cysteine 71, cysteine 44–cysteine 64, cysteine 53–cysteine 84, cysteine 90–cysteine 113, cysteine 124–cysteine 131, and cysteine 133–cysteine 153. One can recognise a Thyroglobulin type-1 1 domain in the interval 87–153; it reads VSRCVAERKY…TAVAHKTPRC (67 aa). The segment at 147 to 230 is disordered; sequence AHKTPRCPGS…QSALEEAKQP (84 aa). A compositionally biased stretch (basic and acidic residues) spans 161–172; sequence VPQREGAGKADD. Asparagine 206 is a glycosylation site (N-linked (GlcNAc...) asparagine). A compositionally biased stretch (polar residues) spans 206–216; it reads NKTNKNSASSC. The Thyroglobulin type-1 2 domain occupies 213–281; sequence ASSCDQEHQS…TSTRYEQPKC (69 aa). Intrachain disulfides connect cysteine 216/cysteine 240, cysteine 251/cysteine 258, and cysteine 260/cysteine 281. Positions 217–230 are enriched in basic and acidic residues; the sequence is DQEHQSALEEAKQP. 2 consecutive EF-hand domains span residues 347-382 and 384-419; these read LEERVVHWYFKLLDKNSSGDIGKKEIKPFKRFLRKK and KPKKCVKKFVEYCDMNNDKSITVQELMGCLGVTREE. Positions 360, 362, 364, 366, 371, 397, 399, 401, 403, and 408 each coordinate Ca(2+). Asparagine 362 is a glycosylation site (N-linked (GlcNAc...) asparagine). The segment at 416–447 is disordered; that stretch reads TREEGKANTRKRHTPRGNAESSSSNRQPRKQG.

As to quaternary structure, binds various proteins from the extracellular matrix. In terms of processing, N-glycosylated. As to expression, strongly expressed in ovary, followed by heart, muscle, spleen, brain, thymus, lung, liver, kidney, spleen, testis, ovary and skeletal muscle.

Its subcellular location is the secreted. It is found in the extracellular space. It localises to the extracellular matrix. The protein localises to the basement membrane. Functionally, can stimulate endothelial cell proliferation, migration, as well as angiogenesis. Promotes matrix assembly and cell adhesiveness. The protein is SPARC-related modular calcium-binding protein 2 (Smoc2) of Mus musculus (Mouse).